Consider the following 719-residue polypeptide: MIYQGNRITVSLLDDGIANMQFNAEGESVNKFDAETNKQFDEAVSALEKADNVKGLIVTSSKGVFIAGADITEFVSHFNKEAAEIEKWIVDINGVFNRFEDLPFPKVAAINGAALGGGCEMTLVCEYRVMGDKAQIGLPETQLGIFPGFGGSVRTPRVIGIDNAVELIATGKAQKPAEALKLGLVDAVVAQDDLQEAAVDLVKKCIAGDLDWQAKREEKLQPVKLNQLEQTMAFSTAKAAIFAKANPKQYPAPAIAIETIEKHVNLGRDEAIKVEAAGFAKAAKTPQAESLVGLFLNDQTVKKLAKQHTKNAHDINEAAVLGAGIMGGGIAYQAASKGLPIIMKDIKSEQLDLGMGEASKLLGKMVERKKMTPAQMGETLSRIRPTLNYGDFGETDIVIEAVVENPKVKHAVLKEVEGLVKDNAILASNTSTISITYLATVLERPENFVGMHFFNPVHRMPLVEVIRGEKSSEEAIATTVALAQRMGKVPVVVNDCPGFLVNRVLFPYFGAFDLLLKQGADFVHVDKVMEKFGWPMGPAYLIDVVGLDTGVHGAEVMAEGFPDRMKPDYKGAIKHLFENNRLGQKNGVGFYKYEKDSRGKPKKTADDATYALLKDTTDTDNQQFDDQTIIDRMMLAFCNETVRCLEDNIVATPSEADMAMIMGVGFPAFRGGPCRYIDQVGLDNYLALCEKYAHLGKAYEAPQKIRDMAAAGETFYPKA.

The interval 1-190 (MIYQGNRITV…KLGLVDAVVA (190 aa)) is enoyl-CoA hydratase/isomerase. Substrate is bound at residue aspartate 298. The 3-hydroxyacyl-CoA dehydrogenase stretch occupies residues 313-719 (HDINEAAVLG…AAGETFYPKA (407 aa)). NAD(+) is bound by residues methionine 326, aspartate 345, 402–404 (VVE), lysine 409, and serine 431. The active-site For 3-hydroxyacyl-CoA dehydrogenase activity is histidine 452. NAD(+) is bound at residue asparagine 455. Asparagine 502 is a substrate binding site.

This sequence in the N-terminal section; belongs to the enoyl-CoA hydratase/isomerase family. The protein in the C-terminal section; belongs to the 3-hydroxyacyl-CoA dehydrogenase family. As to quaternary structure, heterotetramer of two alpha chains (FadB) and two beta chains (FadA).

The enzyme catalyses a (3S)-3-hydroxyacyl-CoA + NAD(+) = a 3-oxoacyl-CoA + NADH + H(+). It carries out the reaction a (3S)-3-hydroxyacyl-CoA = a (2E)-enoyl-CoA + H2O. It catalyses the reaction a 4-saturated-(3S)-3-hydroxyacyl-CoA = a (3E)-enoyl-CoA + H2O. The catalysed reaction is (3S)-3-hydroxybutanoyl-CoA = (3R)-3-hydroxybutanoyl-CoA. The enzyme catalyses a (3Z)-enoyl-CoA = a 4-saturated (2E)-enoyl-CoA. It carries out the reaction a (3E)-enoyl-CoA = a 4-saturated (2E)-enoyl-CoA. The protein operates within lipid metabolism; fatty acid beta-oxidation. In terms of biological role, involved in the aerobic and anaerobic degradation of long-chain fatty acids via beta-oxidation cycle. Catalyzes the formation of 3-oxoacyl-CoA from enoyl-CoA via L-3-hydroxyacyl-CoA. It can also use D-3-hydroxyacyl-CoA and cis-3-enoyl-CoA as substrate. This Psychrobacter sp. (strain PRwf-1) protein is Fatty acid oxidation complex subunit alpha.